We begin with the raw amino-acid sequence, 444 residues long: UPF0761 membrane protein RC1_0578 (444 aa).

Transmembrane regions (helical) follow at residues 49–69 (LLALVPLLTVTFAIFSAFPAY), 103–123 (AAALTGFGVIGLSLTSILLFF), 145–165 (LLSFWAVLTIMPLLLGASLSV), 186–206 (FMLPGLLEAAAFTLMFLMIPN), 219–239 (IAAALLMEVSKVGFGLYIAAF), and 248–268 (ALSVIPIFLFWLYTVWSVVLF). The segment at 423-444 (SGQPSGQVETAVRQRTGLQGRI) is disordered.

This sequence belongs to the UPF0761 family.

Its subcellular location is the cell inner membrane. This chain is UPF0761 membrane protein RC1_0578, found in Rhodospirillum centenum (strain ATCC 51521 / SW).